The chain runs to 519 residues: Maturase K (519 aa).

Belongs to the intron maturase 2 family. MatK subfamily.

It is found in the plastid. It localises to the chloroplast. In terms of biological role, usually encoded in the trnK tRNA gene intron. Probably assists in splicing its own and other chloroplast group II introns. This Keteleeria davidiana (David's keteleeria) protein is Maturase K.